The following is a 469-amino-acid chain: Trigger factor (469 aa).

The region spanning 166–245 (GDFLTIDITA…VKSVKERELP (80 aa)) is the PPIase FKBP-type domain. The tract at residues 430–469 (GGEEEAAEAEAAPAVDSDAVEGEAATEEAAPSDDPAAVKF) is disordered.

This sequence belongs to the FKBP-type PPIase family. Tig subfamily.

It is found in the cytoplasm. The catalysed reaction is [protein]-peptidylproline (omega=180) = [protein]-peptidylproline (omega=0). Its function is as follows. Involved in protein export. Acts as a chaperone by maintaining the newly synthesized protein in an open conformation. Functions as a peptidyl-prolyl cis-trans isomerase. This Arthrobacter sp. (strain FB24) protein is Trigger factor.